The sequence spans 173 residues: uncharacterized protein (173 aa).

The N-terminal stretch at 1–25 is a signal peptide; it reads MPVVTAVGRRRGFAMPWVSTARSGA.

This is an uncharacterized protein from Mycobacterium bovis (strain ATCC BAA-935 / AF2122/97).